We begin with the raw amino-acid sequence, 415 residues long: uncharacterized protein (415 aa).

Transmembrane regions (helical) follow at residues 20–40 (MAYL…FGIL), 43–63 (LMPI…PAIA), 78–98 (IPIL…TPYI), 109–129 (LPNI…VIAF), 155–175 (VILV…LSIS), 243–263 (IVIM…SSLI), 300–320 (IFSS…LIAF), 328–348 (GILC…YTLI), 360–380 (ISFY…LILV), and 388–408 (GSLA…FAIL).

It belongs to the polysaccharide synthase family.

It is found in the cell membrane. This is an uncharacterized protein from Methanocaldococcus jannaschii (strain ATCC 43067 / DSM 2661 / JAL-1 / JCM 10045 / NBRC 100440) (Methanococcus jannaschii).